The primary structure comprises 124 residues: PEP-dependent dihydroxyacetone kinase 1, phosphoryl donor subunit DhaM (124 aa).

One can recognise a PTS EIIA type-4 domain in the interval 4–124 (PYGVVIISHS…AANLKTIEIK (121 aa)). Catalysis depends on His-12, which acts as the Tele-phosphohistidine intermediate.

The protein belongs to the PEP-utilizing enzyme family. In terms of assembly, homodimer. The dihydroxyacetone kinase complex is composed of a homodimer of DhaM, a homodimer of DhaK and the subunit DhaL.

It is found in the cytoplasm. The enzyme catalyses dihydroxyacetone + phosphoenolpyruvate = dihydroxyacetone phosphate + pyruvate. Its function is as follows. Component of the dihydroxyacetone kinase complex, which is responsible for the phosphoenolpyruvate (PEP)-dependent phosphorylation of dihydroxyacetone. DhaM serves as the phosphoryl donor. Is phosphorylated by phosphoenolpyruvate in an EI- and HPr-dependent reaction, and a phosphorelay system on histidine residues finally leads to phosphoryl transfer to DhaL and dihydroxyacetone. This is PEP-dependent dihydroxyacetone kinase 1, phosphoryl donor subunit DhaM from Listeria innocua serovar 6a (strain ATCC BAA-680 / CLIP 11262).